A 967-amino-acid chain; its full sequence is Phosphoenolpyruvate carboxylase (967 aa).

Serine 10 is modified (phosphoserine). Active-site residues include histidine 171 and lysine 601. The tract at residues 915–936 (NASRLPLSRESPEATKPADELV) is disordered. Basic and acidic residues predominate over residues 924–933 (ESPEATKPAD).

It belongs to the PEPCase type 1 family. Homotetramer. The cofactor is Mg(2+).

It localises to the cytoplasm. It catalyses the reaction oxaloacetate + phosphate = phosphoenolpyruvate + hydrogencarbonate. Its activity is regulated as follows. By light-reversible phosphorylation. In terms of biological role, through the carboxylation of phosphoenolpyruvate (PEP) it forms oxaloacetate, a four-carbon dicarboxylic acid source for the tricarboxylic acid cycle. This is Phosphoenolpyruvate carboxylase from Pisum sativum (Garden pea).